The primary structure comprises 366 residues: 3-isopropylmalate dehydrogenase (366 aa).

76–89 (GPKWDANPSHLRPE) provides a ligand contact to NAD(+). Substrate contacts are provided by R96, R106, R134, and D219. Positions 219, 243, and 247 each coordinate Mg(2+). 277–289 (GSAPDIAGKGIAN) contacts NAD(+).

It belongs to the isocitrate and isopropylmalate dehydrogenases family. LeuB type 1 subfamily. As to quaternary structure, homodimer. Requires Mg(2+) as cofactor. Mn(2+) serves as cofactor.

Its subcellular location is the cytoplasm. It carries out the reaction (2R,3S)-3-isopropylmalate + NAD(+) = 4-methyl-2-oxopentanoate + CO2 + NADH. It functions in the pathway amino-acid biosynthesis; L-leucine biosynthesis; L-leucine from 3-methyl-2-oxobutanoate: step 3/4. Catalyzes the oxidation of 3-carboxy-2-hydroxy-4-methylpentanoate (3-isopropylmalate) to 3-carboxy-4-methyl-2-oxopentanoate. The product decarboxylates to 4-methyl-2 oxopentanoate. This Oceanobacillus iheyensis (strain DSM 14371 / CIP 107618 / JCM 11309 / KCTC 3954 / HTE831) protein is 3-isopropylmalate dehydrogenase.